The primary structure comprises 220 residues: Ribose-5-phosphate isomerase A (220 aa).

Substrate is bound by residues 29 to 32 (TGST), 82 to 85 (DGCD), and 95 to 98 (KGGG). Glutamate 104 functions as the Proton acceptor in the catalytic mechanism. Position 122 (lysine 122) interacts with substrate.

It belongs to the ribose 5-phosphate isomerase family. As to quaternary structure, homodimer.

The enzyme catalyses aldehydo-D-ribose 5-phosphate = D-ribulose 5-phosphate. It participates in carbohydrate degradation; pentose phosphate pathway; D-ribose 5-phosphate from D-ribulose 5-phosphate (non-oxidative stage): step 1/1. Functionally, catalyzes the reversible conversion of ribose-5-phosphate to ribulose 5-phosphate. In Laribacter hongkongensis (strain HLHK9), this protein is Ribose-5-phosphate isomerase A.